The chain runs to 472 residues: Riboflavin transporter RibJ (472 aa).

The Cytoplasmic segment spans residues 1 to 11 (MLPCFTRKPVD). A helical transmembrane segment spans residues 12–32 (HPLGFLVALSGLLMQLMSYGI). At 33–58 (DNSYSIFSDDMHKDPSLGYPSVTTIS) the chain is on the extracellular side. A helical transmembrane segment spans residues 59-79 (LGNSVSLGLSPAFGVLCGFLV). Residues 80 to 85 (DRVPPR) lie on the Cytoplasmic side of the membrane. A helical transmembrane segment spans residues 86–106 (LMMAVSTLMLFAGLWLSSTFA). The Extracellular segment spans residues 107-108 (HN). N-linked (GlcNAc...) asparagine glycosylation occurs at Asn108. The chain crosses the membrane as a helical span at residues 109 to 129 (VTAVTFSYCLLASISSACMLS). Over 130–144 (PGAAATSSWFNRYQG) the chain is Cytoplasmic. The chain crosses the membrane as a helical span at residues 145–165 (LAMGINFSGGGVGSAIIPSLA). Residues 166-179 (GKWVVAYGWRKTFR) are Extracellular-facing. A helical membrane pass occupies residues 180-196 (LMSAFCAIGVVATLLSA). The Cytoplasmic portion of the chain corresponds to 197 to 271 (RRAPPKKEEA…TMFSRAFLGN (75 aa)). The segment at 200–248 (PPKKEEAGPSEYDEGQERQEQGEEEQAHTDEENRNNNNSNGETTPARRG) is disordered. Residues 214 to 233 (GQERQEQGEEEQAHTDEENR) show a composition bias toward basic and acidic residues. A helical transmembrane segment spans residues 272 to 292 (FFCWLIFSWAFYSLIYVAVPY). Topologically, residues 293-315 (VSSMGKAGTVYADISPIPTDIAS) are extracellular. Residues 316 to 336 (TLFTFYGVFQIVGSILVGWLA) traverse the membrane as a helical segment. Residues 337–341 (TGTTN) lie on the Cytoplasmic side of the membrane. The chain crosses the membrane as a helical span at residues 342-362 (EFAYVLCATIGGIFCAFLGFC). Over 363–365 (RSY) the chain is Extracellular. Residues 366–386 (VAFALLLCVIGFCMAGMFAVM) form a helical membrane-spanning segment. The Cytoplasmic segment spans residues 387–399 (PALIAERLYGPNL). A helical membrane pass occupies residues 400–420 (GFYMGAVFLAGVVGGFSAPPI). Residues 421–434 (QAELQQRHYGNYTY) are Extracellular-facing. Asn431 is a glycosylation site (N-linked (GlcNAc...) asparagine). A helical transmembrane segment spans residues 435 to 455 (VCVFMSACMTLAAAVCYITMW). The Cytoplasmic segment spans residues 456–472 (RDKRVRIVSAAAEAKLA).

It belongs to the major facilitator superfamily. RibJ family.

It is found in the cell membrane. Functionally, transporter involved in riboflavin (vitamin B2) uptake. Also transports FMN and FAD. The protein is Riboflavin transporter RibJ of Trypanosoma cruzi (strain CL Brener).